A 297-amino-acid chain; its full sequence is 4-hydroxy-tetrahydrodipicolinate synthase (297 aa).

Threonine 49 contacts pyruvate. Residue tyrosine 137 is the Proton donor/acceptor of the active site. The active-site Schiff-base intermediate with substrate is lysine 166. Isoleucine 208 lines the pyruvate pocket.

This sequence belongs to the DapA family. As to quaternary structure, homotetramer; dimer of dimers.

Its subcellular location is the cytoplasm. The enzyme catalyses L-aspartate 4-semialdehyde + pyruvate = (2S,4S)-4-hydroxy-2,3,4,5-tetrahydrodipicolinate + H2O + H(+). It participates in amino-acid biosynthesis; L-lysine biosynthesis via DAP pathway; (S)-tetrahydrodipicolinate from L-aspartate: step 3/4. Its function is as follows. Catalyzes the condensation of (S)-aspartate-beta-semialdehyde [(S)-ASA] and pyruvate to 4-hydroxy-tetrahydrodipicolinate (HTPA). This chain is 4-hydroxy-tetrahydrodipicolinate synthase, found in Phocaeicola vulgatus (strain ATCC 8482 / DSM 1447 / JCM 5826 / CCUG 4940 / NBRC 14291 / NCTC 11154) (Bacteroides vulgatus).